The sequence spans 488 residues: UDP-N-acetylmuramate--L-alanine ligase (488 aa).

127–133 (GTHGKTT) serves as a coordination point for ATP.

This sequence belongs to the MurCDEF family.

Its subcellular location is the cytoplasm. It carries out the reaction UDP-N-acetyl-alpha-D-muramate + L-alanine + ATP = UDP-N-acetyl-alpha-D-muramoyl-L-alanine + ADP + phosphate + H(+). The protein operates within cell wall biogenesis; peptidoglycan biosynthesis. Functionally, cell wall formation. This is UDP-N-acetylmuramate--L-alanine ligase from Shewanella sp. (strain MR-4).